The primary structure comprises 220 residues: Acetate CoA-transferase subunit alpha (220 aa).

24–30 (GGFMGIG) contacts CoA.

This sequence belongs to the 3-oxoacid CoA-transferase subunit A family. In terms of assembly, heterotetramer composed of two alpha subunits (AtoD) and two beta subunits (AtoA).

The protein localises to the cytoplasm. It catalyses the reaction an acyl-CoA + acetate = a carboxylate + acetyl-CoA. It carries out the reaction acetoacetate + acetyl-CoA = acetoacetyl-CoA + acetate. The catalysed reaction is butanoate + acetyl-CoA = butanoyl-CoA + acetate. The enzyme catalyses acetoacetate + butanoyl-CoA = acetoacetyl-CoA + butanoate. Its pathway is lipid metabolism; short-chain fatty acid metabolism. Inhibited by p-chloromercuribenzoate. Coenzyme A transferase which is involved in short-chain fatty acid degradation and catalyzes the activation of short-chain fatty acids to their respective CoA thiolesters. During acetoacetate degradation, catalyzes the transfer of CoA from acetyl-CoA to acetoacetate by a mechanism involving a covalent enzyme-CoA compound as a reaction intermediate. Utilizes a variety of short chain acyl-CoA and carboxylic acid substrates but exhibits maximal activity with normal and 3-keto substrates. In Escherichia coli (strain K12), this protein is Acetate CoA-transferase subunit alpha.